Reading from the N-terminus, the 259-residue chain is S-methyl-5'-thioadenosine phosphorylase (259 aa).

Phosphate-binding positions include Ser-9 and 50–51 (RH). Position 175 (Met-175) interacts with substrate. Position 176 (Thr-176) interacts with phosphate. 199–201 (DLD) is a binding site for substrate.

The protein belongs to the PNP/MTAP phosphorylase family. MTAP subfamily. As to quaternary structure, homohexamer. Dimer of a homotrimer.

The catalysed reaction is S-methyl-5'-thioadenosine + phosphate = 5-(methylsulfanyl)-alpha-D-ribose 1-phosphate + adenine. Its pathway is amino-acid biosynthesis; L-methionine biosynthesis via salvage pathway; S-methyl-5-thio-alpha-D-ribose 1-phosphate from S-methyl-5'-thioadenosine (phosphorylase route): step 1/1. Its function is as follows. Catalyzes the reversible phosphorylation of S-methyl-5'-thioadenosine (MTA) to adenine and 5-methylthioribose-1-phosphate. Involved in the breakdown of MTA, a major by-product of polyamine biosynthesis. Responsible for the first step in the methionine salvage pathway after MTA has been generated from S-adenosylmethionine. Has broad substrate specificity with 6-aminopurine nucleosides as preferred substrates. The polypeptide is S-methyl-5'-thioadenosine phosphorylase (Mycolicibacterium smegmatis (strain ATCC 700084 / mc(2)155) (Mycobacterium smegmatis)).